The primary structure comprises 843 residues: Potassium transporter 10 (843 aa).

A compositionally biased stretch (low complexity) spans 1 to 15 (MKSPSPVDPESPSSP). A disordered region spans residues 1–25 (MKSPSPVDPESPSSPDCKGGSSSKR). Residues 1 to 34 (MKSPSPVDPESPSSPDCKGGSSSKRRRLPWRMTM) are Cytoplasmic-facing. The helical transmembrane segment at 35 to 55 (SLAYQSLGVVYGDLSTSPLYV) threads the bilayer. Over 56-72 (YKAAFAEDIQHSETNEE) the chain is Vacuolar. The helical transmembrane segment at 73-93 (ILGVLSFVFWTLTLVPLLKYV) threads the bilayer. Topologically, residues 94-183 (CVVLRADDNG…LLERHKVLQR (90 aa)) are cytoplasmic. A helical membrane pass occupies residues 184–204 (VLLVLALVGTCMVIGDGVLTP). Over 205–225 (AISVFSAVSGLELSMEKHQHK) the chain is Vacuolar. A helical transmembrane segment spans residues 226-246 (YVEVPIACFVLVCLFCLQHYG). Over 247–249 (THR) the chain is Cytoplasmic. Residues 250–270 (VGFLFAPIVITWLLCISMIGV) traverse the membrane as a helical segment. Topologically, residues 271–298 (YNIVHWEPNVYRALSPYYMYKFLKKTQR) are vacuolar. The helical transmembrane segment at 299–319 (GGWMSLGGILLCITGSEAMFA) threads the bilayer. Residues 320–326 (DLGHFNQ) lie on the Cytoplasmic side of the membrane. Residues 327-347 (LSIQIAFTCMVYPSLILAYMG) traverse the membrane as a helical segment. At 348–377 (QAAYLCKHHIIESDYRIGFYVSVPEKIRWP) the chain is on the vacuolar side. A helical transmembrane segment spans residues 378–398 (VLAIAILAAVVGSQAVITGTF). Residues 399–425 (SMIKQCTALGCFPRVKIVHTSDKVHGQ) lie on the Cytoplasmic side of the membrane. The helical transmembrane segment at 426 to 446 (IYIPEINWILMILCLAITIGF) threads the bilayer. Residues 447–451 (RDTKH) are Vacuolar-facing. A helical membrane pass occupies residues 452–472 (LGNASGLAVITVMLVTTCLMS). Topologically, residues 473-482 (LVIVLCWHKS) are cytoplasmic. A helical membrane pass occupies residues 483-505 (IFLAFGFIIFFGTIEALYFSASL). The Vacuolar portion of the chain corresponds to 506-510 (IKFRE). Residues 511–531 (GAWVPIVLAFIFMAIMCIWHY) form a helical membrane-spanning segment. The Cytoplasmic segment spans residues 532-843 (GTIKKYEFDL…TLEVGMIYYV (312 aa)). Residues 667–747 (AASSKPKNVC…IMSPSPSPPP (81 aa)) form a disordered region. Gly residues predominate over residues 718 to 735 (GGSGSGSGRGSSRGGGGA).

This sequence belongs to the HAK/KUP transporter (TC 2.A.72.3) family. In terms of tissue distribution, expressed in roots, shoots, and panicle at flowering stage.

The protein localises to the vacuole membrane. Its function is as follows. High-affinity potassium transporter. In Oryza sativa subsp. japonica (Rice), this protein is Potassium transporter 10 (HAK10).